A 133-amino-acid polypeptide reads, in one-letter code: Small ribosomal subunit protein uS19 (133 aa).

Belongs to the universal ribosomal protein uS19 family.

Protein S19 forms a complex with S13 that binds strongly to the 16S ribosomal RNA. The chain is Small ribosomal subunit protein uS19 from Thermococcus onnurineus (strain NA1).